Here is an 83-residue protein sequence, read N- to C-terminus: Large ribosomal subunit protein bL31 (83 aa).

This sequence belongs to the bacterial ribosomal protein bL31 family. Type A subfamily. Part of the 50S ribosomal subunit.

Binds the 23S rRNA. This Gloeothece citriformis (strain PCC 7424) (Cyanothece sp. (strain PCC 7424)) protein is Large ribosomal subunit protein bL31.